Here is a 357-residue protein sequence, read N- to C-terminus: MSKCGRKKYMRTNVRQMTMETVESQQDRSVTRSVAEHSSAHMQTGQISVPTLAQVSVAGSGTGRGSPAVTLVQLPSGQTVQVQGVIQTPHPSVIQSPQIQTVQVATIAETDDSADSEVIDSHKRREILSRRPSYRKILNELSSDVPGIPKIEEEKSEEEGTPPNIATMAVPTSIYQTSTGQYIAIAQGGTIQISNPGSDGVQGLQALTMTNSGAPPPGATIVQYAAQSADGTQQFFVPGSQVVVQDEETDLAPSHMAAATGDMPTYQIRAPTTALPQGVVMAASPGSLHSPQQLAEEATRKRELRLMKNREAAKECRRRKKEYVKCLESRVAVLEVQNKKLIEELETLKDICSPKTD.

The tract at residues 20–43 is disordered; the sequence is ETVESQQDRSVTRSVAEHSSAHMQ. The segment covering 25 to 39 has biased composition (basic and acidic residues); it reads QQDRSVTRSVAEHSS. The KID domain maps to 101–160; that stretch reads TVQVATIAETDDSADSEVIDSHKRREILSRRPSYRKILNELSSDVPGIPKIEEEKSEEEG. Phosphoserine occurs at positions 116, 142, 284, 287, and 290. One can recognise a bZIP domain in the interval 299–357; that stretch reads TRKRELRLMKNREAAKECRRRKKEYVKCLESRVAVLEVQNKKLIEELETLKDICSPKTD. The basic motif stretch occupies residues 300–325; that stretch reads RKRELRLMKNREAAKECRRRKKEYVK. A leucine-zipper region spans residues 327–348; sequence LESRVAVLEVQNKKLIEELETL.

The protein belongs to the bZIP family. Binds DNA as a dimer. Interacts with CDC34. Interacts with FHL5. May interact with TSSK4. Isoform 1 forms a heterodimer with CREB3L4. Stimulated by phosphorylation. Phosphorylated on Ser-116 by TSSK4 in vitro. Post-translationally, ubiquitinated by CDC34 and RAD6B in order to be degraded by the proteasome. Expressed in the testis.

It localises to the nucleus. It is found in the cytoplasm. Functionally, transcriptional regulator that binds the cAMP response element (CRE), a sequence present in many viral and cellular promoters. Isoforms are either transcriptional activators or repressors. Isoform 2, isoform 3 and isoform 4 are repressors, while isoform 1 is an activator. Plays a role in spermatogenesis and is involved in spermatid maturation. Binding of isoform 1 (activator) to CRE is increased by CREB3L4. The CREM isoform 1-CREB3L4 heterodimer functions through CRE and may recruit HIRA to CRE to regulate histone exchange. Plays a role in the regulation of the circadian clock: acts as a transcriptional repressor of the core circadian component PER1 by directly binding to cAMP response elements in its promoter. This chain is cAMP-responsive element modulator (Crem), found in Mus musculus (Mouse).